A 162-amino-acid polypeptide reads, in one-letter code: Probable tRNA (guanine(10)-N2)-dimethyltransferase (162 aa).

This sequence belongs to the methyltransferase superfamily. Trm-G10 family. In terms of assembly, monomer.

Its subcellular location is the cytoplasm. The enzyme catalyses guanosine(10) in tRNA + 2 S-adenosyl-L-methionine = N(2)-dimethylguanosine(10) in tRNA + 2 S-adenosyl-L-homocysteine + 2 H(+). In terms of biological role, catalyzes the adenosylmethionine-dependent methylation of the exocyclic amino group (N(2)) of guanosine at position 10 of various tRNAs. Acts via a two-step process that leads to the formation of either N(2)-monomethyl (m(2)G) or N(2)-dimethylguanosine (m(2)(2)G). This is Probable tRNA (guanine(10)-N2)-dimethyltransferase (trmG10) from Methanothermococcus thermolithotrophicus (Methanococcus thermolithotrophicus).